Reading from the N-terminus, the 475-residue chain is tRNA-2-methylthio-N(6)-dimethylallyladenosine synthase (475 aa).

One can recognise an MTTase N-terminal domain in the interval 2 to 119 (AKLHITTWGC…LPEMINKIRG (118 aa)). [4Fe-4S] cluster is bound by residues C11, C48, C82, C156, C160, and C163. The region spanning 142 to 374 (RAEGPTAFVS…QQRINHQAMQ (233 aa)) is the Radical SAM core domain. The TRAM domain occupies 377–440 (RAMLGTEQRV…TNSLRGDVVR (64 aa)).

It belongs to the methylthiotransferase family. MiaB subfamily. In terms of assembly, monomer. [4Fe-4S] cluster is required as a cofactor.

The protein localises to the cytoplasm. It catalyses the reaction N(6)-dimethylallyladenosine(37) in tRNA + (sulfur carrier)-SH + AH2 + 2 S-adenosyl-L-methionine = 2-methylsulfanyl-N(6)-dimethylallyladenosine(37) in tRNA + (sulfur carrier)-H + 5'-deoxyadenosine + L-methionine + A + S-adenosyl-L-homocysteine + 2 H(+). Functionally, catalyzes the methylthiolation of N6-(dimethylallyl)adenosine (i(6)A), leading to the formation of 2-methylthio-N6-(dimethylallyl)adenosine (ms(2)i(6)A) at position 37 in tRNAs that read codons beginning with uridine. This chain is tRNA-2-methylthio-N(6)-dimethylallyladenosine synthase, found in Actinobacillus pleuropneumoniae serotype 5b (strain L20).